Reading from the N-terminus, the 67-residue chain is Conotoxin Cl6.6a (67 aa).

The N-terminal stretch at 1 to 24 (MKLTCVLIAAVLLLAVCQLDSADA) is a signal peptide. A propeptide spanning residues 25–37 (TGYMRKNPSLRSP) is cleaved from the precursor. 3 disulfide bridges follow: cysteine 43-cysteine 57, cysteine 50-cysteine 61, and cysteine 56-cysteine 65.

The protein belongs to the conotoxin O1 superfamily. In terms of tissue distribution, expressed by the venom duct.

It is found in the secreted. In Californiconus californicus (California cone), this protein is Conotoxin Cl6.6a.